Reading from the N-terminus, the 924-residue chain is Periplasmic nitrate reductase (924 aa).

Positions 1 to 30 (MNRRDFIKNTAIASAASVAGLSVPSSMLGA) form a signal peptide, tat-type signal. The 4Fe-4S Mo/W bis-MGD-type domain maps to 35–91 (WKWDKAVCRFCGTGCGIMIARKDGKIVATKGDPAAPVNRGLNCIKGYFNAKIMYGED). 4 residues coordinate [4Fe-4S] cluster: cysteine 42, cysteine 45, cysteine 49, and cysteine 77. Residues lysine 79, glutamine 147, asparagine 172, cysteine 176, 209–216 (WGANMAEM), methionine 417, glutamine 421, asparagine 527, 552–553 (SD), lysine 575, aspartate 602, and 814–823 (TGRVLEHWHS) each bind Mo-bis(molybdopterin guanine dinucleotide). A substrate-binding site is contributed by tryptophan 890. Mo-bis(molybdopterin guanine dinucleotide) contacts are provided by asparagine 898 and lysine 915.

Belongs to the prokaryotic molybdopterin-containing oxidoreductase family. NasA/NapA/NarB subfamily. Component of the periplasmic nitrate reductase NapAB complex composed of NapA and NapB. [4Fe-4S] cluster is required as a cofactor. Requires Mo-bis(molybdopterin guanine dinucleotide) as cofactor. Post-translationally, predicted to be exported by the Tat system. The position of the signal peptide cleavage has not been experimentally proven.

It is found in the periplasm. It catalyses the reaction 2 Fe(II)-[cytochrome] + nitrate + 2 H(+) = 2 Fe(III)-[cytochrome] + nitrite + H2O. Functionally, catalytic subunit of the periplasmic nitrate reductase complex NapAB. Receives electrons from NapB and catalyzes the reduction of nitrate to nitrite. In Campylobacter jejuni subsp. jejuni serotype O:6 (strain 81116 / NCTC 11828), this protein is Periplasmic nitrate reductase.